The sequence spans 429 residues: Phosphoribosylamine--glycine ligase (429 aa).

An ATP-grasp domain is found at 109 to 316 (KDFLARHNIP…LVELCLAACE (208 aa)). Position 135–196 (135–196 (LREKGAPIVI…EEFLDGEEAS (62 aa))) interacts with ATP. Positions 212–236 (SQDHKRVGDKDTGPNTGGMGAYSPA) are disordered. Over residues 213–223 (QDHKRVGDKDT) the composition is skewed to basic and acidic residues. Residues E286 and N288 each coordinate Mg(2+).

This sequence belongs to the GARS family. As to quaternary structure, monomer. It depends on Mg(2+) as a cofactor. The cofactor is Mn(2+).

The enzyme catalyses 5-phospho-beta-D-ribosylamine + glycine + ATP = N(1)-(5-phospho-beta-D-ribosyl)glycinamide + ADP + phosphate + H(+). It functions in the pathway purine metabolism; IMP biosynthesis via de novo pathway; N(1)-(5-phospho-D-ribosyl)glycinamide from 5-phospho-alpha-D-ribose 1-diphosphate: step 2/2. This is Phosphoribosylamine--glycine ligase from Escherichia coli O6:H1 (strain CFT073 / ATCC 700928 / UPEC).